The primary structure comprises 284 residues: Pantothenate synthetase (284 aa).

30–37 (MGNLHDGH) serves as a coordination point for ATP. His37 serves as the catalytic Proton donor. Residue Gln61 coordinates (R)-pantoate. Gln61 provides a ligand contact to beta-alanine. Position 149-152 (149-152 (GEKD)) interacts with ATP. Gln155 is a (R)-pantoate binding site. Residues Val178 and 186–189 (LSSR) each bind ATP.

It belongs to the pantothenate synthetase family. As to quaternary structure, homodimer.

It localises to the cytoplasm. It carries out the reaction (R)-pantoate + beta-alanine + ATP = (R)-pantothenate + AMP + diphosphate + H(+). Its pathway is cofactor biosynthesis; (R)-pantothenate biosynthesis; (R)-pantothenate from (R)-pantoate and beta-alanine: step 1/1. Functionally, catalyzes the condensation of pantoate with beta-alanine in an ATP-dependent reaction via a pantoyl-adenylate intermediate. In Klebsiella pneumoniae (strain 342), this protein is Pantothenate synthetase.